A 292-amino-acid polypeptide reads, in one-letter code: Nitrogenase iron protein 2 (292 aa).

ATP is bound at residue 8-15 (GKGGIGKS). Cys-106 lines the [4Fe-4S] cluster pocket. Position 109 is an ADP-ribosylarginine; by dinitrogenase reductase ADP-ribosyltransferase (Arg-109). [4Fe-4S] cluster is bound at residue Cys-142.

It belongs to the NifH/BchL/ChlL family. As to quaternary structure, homodimer. [4Fe-4S] cluster is required as a cofactor. In terms of processing, the reversible ADP-ribosylation of Arg-109 inactivates the nitrogenase reductase and regulates nitrogenase activity.

The enzyme catalyses N2 + 8 reduced [2Fe-2S]-[ferredoxin] + 16 ATP + 16 H2O = H2 + 8 oxidized [2Fe-2S]-[ferredoxin] + 2 NH4(+) + 16 ADP + 16 phosphate + 6 H(+). In terms of biological role, the key enzymatic reactions in nitrogen fixation are catalyzed by the nitrogenase complex, which has 2 components: the iron protein and the molybdenum-iron protein. In Methanothermococcus thermolithotrophicus (Methanococcus thermolithotrophicus), this protein is Nitrogenase iron protein 2 (nifH2).